A 209-amino-acid chain; its full sequence is uncharacterized protein (209 aa).

Residues 1–11 (MMRTNAGKETK) show a composition bias toward basic and acidic residues. The interval 1 to 20 (MMRTNAGKETKGYNPAPADS) is disordered.

This is an uncharacterized protein from Caenorhabditis elegans.